Consider the following 151-residue polypeptide: UPF0208 membrane protein YfbV (151 aa).

A run of 2 helical transmembrane segments spans residues 46–65 (YAIR…QIAL) and 69–91 (LGPA…WWLG).

It belongs to the UPF0208 family.

The protein resides in the cell inner membrane. The polypeptide is UPF0208 membrane protein YfbV (Shigella boydii serotype 18 (strain CDC 3083-94 / BS512)).